The chain runs to 167 residues: Ribosome maturation factor RimM (167 aa).

The 74-residue stretch at E94–L167 folds into the PRC barrel domain.

This sequence belongs to the RimM family. Binds ribosomal protein uS19.

It is found in the cytoplasm. An accessory protein needed during the final step in the assembly of 30S ribosomal subunit, possibly for assembly of the head region. Essential for efficient processing of 16S rRNA. May be needed both before and after RbfA during the maturation of 16S rRNA. It has affinity for free ribosomal 30S subunits but not for 70S ribosomes. This chain is Ribosome maturation factor RimM, found in Thermoanaerobacter pseudethanolicus (strain ATCC 33223 / 39E) (Clostridium thermohydrosulfuricum).